Here is a 137-residue protein sequence, read N- to C-terminus: Protein cornichon homolog 3 (137 aa).

The next 3 membrane-spanning stretches (helical) occupy residues 8-28 (IISF…LISL), 54-74 (ILQG…MALL), and 113-133 (LAYI…STLD).

It belongs to the cornichon family.

The protein localises to the membrane. The protein is Protein cornichon homolog 3 of Arabidopsis thaliana (Mouse-ear cress).